The chain runs to 324 residues: RING-H2 finger protein ATL3 (324 aa).

Residues 24 to 44 (IILTAIIVLFMAVLFVLILHL) traverse the membrane as a helical segment. The RING-type; atypical zinc-finger motif lies at 127–169 (CSICLSELVKGDKARLLPKCNHSFHVECIDMWFQSHSTCPICR). Disordered regions lie at residues 179–210 (SSKRVEQVPDNAENAGTTNNNHDALSQLSTSS), 226–248 (VSTGNTNVGTQEDGAAGNGASQS), and 299–324 (RDKRVGCSNSSTSNSSSSNAVASVDP). Polar residues-rich tracts occupy residues 192–210 (NAGTTNNNHDALSQLSTSS) and 226–235 (VSTGNTNVGT). Over residues 306 to 324 (SNSSTSNSSSSNAVASVDP) the composition is skewed to low complexity.

The protein belongs to the RING-type zinc finger family. ATL subfamily.

It is found in the membrane. It carries out the reaction S-ubiquitinyl-[E2 ubiquitin-conjugating enzyme]-L-cysteine + [acceptor protein]-L-lysine = [E2 ubiquitin-conjugating enzyme]-L-cysteine + N(6)-ubiquitinyl-[acceptor protein]-L-lysine.. The protein operates within protein modification; protein ubiquitination. The protein is RING-H2 finger protein ATL3 (ATL3) of Arabidopsis thaliana (Mouse-ear cress).